A 1043-amino-acid chain; its full sequence is Sucrose-phosphate synthase 1 (1043 aa).

Residues 95–117 (EEKEAQRLAKRRLEREKGRREAT) are compositionally biased toward basic and acidic residues. The tract at residues 95 to 127 (EEKEAQRLAKRRLEREKGRREATADMSEEFSEG) is disordered. Ser121, Ser125, Ser152, and Ser155 each carry phosphoserine. The interval 670–693 (PRHPQWQSDDGGDNSEPESPSDSL) is disordered.

It belongs to the glycosyltransferase 1 family. Homodimer or homotetramer. Phosphorylated at Ser-152 upon sucrose supply. As to expression, expressed in seeds, stems, rosette leaves, flowers and siliques. Highly expressed in maturing nectaries.

The catalysed reaction is beta-D-fructose 6-phosphate + UDP-alpha-D-glucose = sucrose 6(F)-phosphate + UDP + H(+). It functions in the pathway glycan biosynthesis; sucrose biosynthesis; sucrose from D-fructose 6-phosphate and UDP-alpha-D-glucose: step 1/2. Its activity is regulated as follows. Activity is regulated by phosphorylation and moderated by concentration of metabolites and light. Plays a major role in photosynthetic sucrose synthesis by catalyzing the rate-limiting step of sucrose biosynthesis from UDP-glucose and fructose- 6-phosphate. Involved in the regulation of carbon partitioning in the leaves of plants. May regulate the synthesis of sucrose and therefore play a major role as a limiting factor in the export of photoassimilates out of the leaf. Plays a role for sucrose availability that is essential for plant growth and fiber elongation. Required for nectar secretion. This is Sucrose-phosphate synthase 1 (SPS1) from Arabidopsis thaliana (Mouse-ear cress).